The chain runs to 355 residues: Protein RecA (355 aa).

67–74 (GPESSGKT) is a binding site for ATP.

It belongs to the RecA family.

It is found in the cytoplasm. In terms of biological role, can catalyze the hydrolysis of ATP in the presence of single-stranded DNA, the ATP-dependent uptake of single-stranded DNA by duplex DNA, and the ATP-dependent hybridization of homologous single-stranded DNAs. It interacts with LexA causing its activation and leading to its autocatalytic cleavage. The protein is Protein RecA of Shewanella baltica (strain OS195).